The sequence spans 229 residues: MFAIQPGLAEGGQFLGDPPPGLCQPELQPDSNSNFMASAKDANENWHGMPGRVEPILRRSSSESPSDNQAFQAPGSPEEGVRSPPEGAEIPGAEPEKMGGAGTVCSPLEDNGYASSSLSIDSRSSSPEPACGTPRGPGPPDPLLPSVAQAVQHLQVQERYKEQEKEKHHVHLVMYRRLALLQWIRGLQHQLIDQQARLQESFDTILDNRKELIRCLQQRAAPSRPQDQA.

Residues 1–144 (MFAIQPGLAE…RGPGPPDPLL (144 aa)) form a disordered region. A compositionally biased stretch (polar residues) spans 62-71 (SESPSDNQAF). Composition is skewed to low complexity over residues 84–93 (PPEGAEIPGA) and 115–126 (SSSLSIDSRSSS).

The protein belongs to the UPF0500 family.

The chain is UPF0500 protein C1orf216 (C1orf216) from Homo sapiens (Human).